Consider the following 214-residue polypeptide: Small ribosomal subunit protein eS1 (214 aa).

Belongs to the eukaryotic ribosomal protein eS1 family.

In Aeropyrum pernix (strain ATCC 700893 / DSM 11879 / JCM 9820 / NBRC 100138 / K1), this protein is Small ribosomal subunit protein eS1.